The sequence spans 133 residues: uncharacterized protein (133 aa).

This is an uncharacterized protein from Mycobacterium tuberculosis (strain CDC 1551 / Oshkosh).